A 124-amino-acid chain; its full sequence is Large ribosomal subunit protein bL12 (124 aa).

The protein belongs to the bacterial ribosomal protein bL12 family. As to quaternary structure, homodimer. Part of the ribosomal stalk of the 50S ribosomal subunit. Forms a multimeric L10(L12)X complex, where L10 forms an elongated spine to which 2 to 4 L12 dimers bind in a sequential fashion. Binds GTP-bound translation factors.

In terms of biological role, forms part of the ribosomal stalk which helps the ribosome interact with GTP-bound translation factors. Is thus essential for accurate translation. The chain is Large ribosomal subunit protein bL12 from Anaeromyxobacter dehalogenans (strain 2CP-C).